The chain runs to 645 residues: 1,4-alpha-glucan branching enzyme GlgB (645 aa).

The active-site Nucleophile is Asp-309. The active-site Proton donor is the Glu-352. Residues 621–645 (MRKGSKKQDGKKAELRSNATSRRKR) are disordered. A compositionally biased stretch (basic and acidic residues) spans 626–635 (KKQDGKKAEL).

This sequence belongs to the glycosyl hydrolase 13 family. GlgB subfamily. In terms of assembly, monomer.

The enzyme catalyses Transfers a segment of a (1-&gt;4)-alpha-D-glucan chain to a primary hydroxy group in a similar glucan chain.. Its pathway is glycan biosynthesis; glycogen biosynthesis. Its function is as follows. Catalyzes the formation of the alpha-1,6-glucosidic linkages in glycogen by scission of a 1,4-alpha-linked oligosaccharide from growing alpha-1,4-glucan chains and the subsequent attachment of the oligosaccharide to the alpha-1,6 position. This chain is 1,4-alpha-glucan branching enzyme GlgB, found in Bacillus cytotoxicus (strain DSM 22905 / CIP 110041 / 391-98 / NVH 391-98).